The sequence spans 81 residues: Large ribosomal subunit protein bL27 (81 aa).

A compositionally biased stretch (polar residues) spans 1-11 (MATSKSGGSSK). A disordered region spans residues 1–23 (MATSKSGGSSKNGRDSISKRLGV).

Belongs to the bacterial ribosomal protein bL27 family.

The protein is Large ribosomal subunit protein bL27 of Borrelia garinii subsp. bavariensis (strain ATCC BAA-2496 / DSM 23469 / PBi) (Borreliella bavariensis).